A 347-amino-acid chain; its full sequence is Photosystem II assembly protein Ycf48 (347 aa).

The first 38 residues, Met-1 to Ala-38, serve as a signal peptide directing secretion. Positions Arg-202 to Arg-226 match the Arg-rich patch motif.

It belongs to the Ycf48 family. Interacts with the D1 protein (crystallized with PsbA1 or PsbA3), via the latter's C-terminal prepropeptide, may interact with parts of the mature D1 protein as well.

The protein localises to the cellular thylakoid lumen. In terms of biological role, a factor required for optimal assembly of photosystem II (PSII), acting in the early stages of PSII assembly. Also plays a role in replacement of photodamaged D1 (psbA). Assists YidC in synthesis of chlorophyll-binding proteins. In Thermosynechococcus vestitus (strain NIES-2133 / IAM M-273 / BP-1), this protein is Photosystem II assembly protein Ycf48.